The following is a 383-amino-acid chain: N-acetyldiaminopimelate deacetylase (383 aa).

Asp-75 is a catalytic residue. Residue Glu-134 is the Proton acceptor of the active site.

The protein belongs to the peptidase M20A family. N-acetyldiaminopimelate deacetylase subfamily.

It catalyses the reaction N-acetyl-(2S,6S)-2,6-diaminopimelate + H2O = (2S,6S)-2,6-diaminopimelate + acetate. It participates in amino-acid biosynthesis; L-lysine biosynthesis via DAP pathway; LL-2,6-diaminopimelate from (S)-tetrahydrodipicolinate (acetylase route): step 3/3. Catalyzes the conversion of N-acetyl-diaminopimelate to diaminopimelate and acetate. This is N-acetyldiaminopimelate deacetylase from Lactobacillus acidophilus (strain ATCC 700396 / NCK56 / N2 / NCFM).